Consider the following 315-residue polypeptide: Malate dehydrogenase (315 aa).

Residues 10–15 (GSGFTG) and Asp-34 each bind NAD(+). 2 residues coordinate substrate: Arg-85 and Arg-91. NAD(+) contacts are provided by residues Asn-98 and 121-123 (LTN). Asn-123 and Arg-154 together coordinate substrate. His-178 functions as the Proton acceptor in the catalytic mechanism.

It belongs to the LDH/MDH superfamily. MDH type 3 family.

The catalysed reaction is (S)-malate + NAD(+) = oxaloacetate + NADH + H(+). In terms of biological role, catalyzes the reversible oxidation of malate to oxaloacetate. In Symbiobacterium thermophilum (strain DSM 24528 / JCM 14929 / IAM 14863 / T), this protein is Malate dehydrogenase.